We begin with the raw amino-acid sequence, 301 residues long: 2-methoxy-6-polyprenyl-1,4-benzoquinol methylase, mitochondrial (301 aa).

The transit peptide at 1 to 16 (MQTTRSTRLLSLARRF) directs the protein to the mitochondrion. Residues 20 to 31 (RTASQSAQNSKG) show a composition bias toward polar residues. Residues 20-44 (RTASQSAQNSKGMASGAESISGKEK) are disordered. S-adenosyl-L-methionine-binding positions include Thr-111, Asp-139, and 173–174 (DA).

This sequence belongs to the class I-like SAM-binding methyltransferase superfamily. MenG/UbiE family. In terms of assembly, component of a multi-subunit COQ enzyme complex.

The protein resides in the mitochondrion inner membrane. The enzyme catalyses a 2-methoxy-6-(all-trans-polyprenyl)benzene-1,4-diol + S-adenosyl-L-methionine = a 5-methoxy-2-methyl-3-(all-trans-polyprenyl)benzene-1,4-diol + S-adenosyl-L-homocysteine + H(+). It participates in cofactor biosynthesis; ubiquinone biosynthesis. Functionally, methyltransferase required for the conversion of 2-polyprenyl-6-methoxy-1,4-benzoquinol (DDMQH2) to 2-polyprenyl-3-methyl-6-methoxy-1,4-benzoquinol (DMQH2). This is 2-methoxy-6-polyprenyl-1,4-benzoquinol methylase, mitochondrial from Drosophila melanogaster (Fruit fly).